A 504-amino-acid chain; its full sequence is TGF-beta-activated kinase 1 and MAP3K7-binding protein 1 (504 aa).

The interval 1 to 22 (MAAQRRSLLQSEQQPSWTDDLP) is disordered. At serine 7 the chain carries Phosphoserine. Positions 7–17 (SLLQSEQQPSW) are enriched in polar residues. Positions 28-365 (GVGSASNRSY…EDMTLLVRNF (338 aa)) constitute a PPM-type phosphatase domain. Residue serine 378 is modified to Phosphoserine. The O-linked (GlcNAc) serine glycan is linked to serine 395. Serine 423 carries the phosphoserine; by MAPK14 modification. Positions 430–439 (ATPTLTNQSP) are enriched in polar residues. The segment at 430-478 (ATPTLTNQSPTLTLQSTNTHTQSSSSSSDGGLFRSRPAHSLPPGEDGRV) is disordered. Threonine 431 is modified (phosphothreonine; by MAPK14). Serine 438 bears the Phosphoserine; by MAPK14 mark. The span at 440–457 (TLTLQSTNTHTQSSSSSS) shows a compositional bias: low complexity. The residue at position 442 (threonine 442) is a Phosphothreonine.

In terms of assembly, interacts with XIAP and BIRC7. Interacts with TRAF6 and MAP3K7; during IL-1 signaling. Identified in the TRIKA2 complex composed of MAP3K7, TAB1 and TAB2. Interacts with TRAF6 and MAPK14; these interactions allow MAPK14 autophosphorylation. Interacts with STING1; interaction takes place following cGAMP activation and promotes TAB1 recruitment to the endoplasmic reticulum, triggering MAP3K7/TAK1 activation and STING1 phosphorylation. Post-translationally, phosphorylated at all three sites Ser-423, Thr-431 and Ser-438 by MAPK14 when cells were exposed to cellular stresses, or stimulated with TNF-alpha, IL1 or LPS. These phosphorylations inhibit TAK1 activation by a feedback control mechanism. Dephosphorylated by DUSP14 at Ser-438, leading to TAB1-MAP3K7/TAK1 complex inactivation in T-cells. Ubiquitinated by MAP3K1 with 'Lys-63'-linked polyubiquitin; leading to activation of TAK1 and of JNK and p38 MAP kinases following EGF and TGF-beta stimulation. Ubiquitinated by ITCH with 'Lys-48'-linked polyubiquitin; leading to proteasomal degradation. Ubiquitinated by RNF114 during maternal-to-zygotic transition; leading to degradation. In terms of processing, (Microbial infection) Deubiquitinated by Y.enterocolitica YopP. Post-translationally, O-GlcNAcylated at Ser-395 by OGT is required for full MAP3K7/TAK1 activation upon stimulation with IL-1 or osmotic stress. Deglycosylated at Ser-395 by OGA. In terms of tissue distribution, ubiquitous.

Its subcellular location is the cytoplasm. The protein resides in the cytosol. It localises to the endoplasmic reticulum membrane. Key adapter protein that plays an essential role in JNK and NF-kappa-B activation and proinflammatory cytokines production in response to stimulation with TLRs and cytokines. Mechanistically, associates with the catalytic domain of MAP3K7/TAK1 to trigger MAP3K7/TAK1 autophosphorylation leading to its full activation. Similarly, associates with MAPK14 and triggers its autophosphorylation and subsequent activation. In turn, MAPK14 phosphorylates TAB1 and inhibits MAP3K7/TAK1 activation in a feedback control mechanism. Also plays a role in recruiting MAPK14 to the TAK1 complex for the phosphorylation of the TAB2 and TAB3 regulatory subunits. The sequence is that of TGF-beta-activated kinase 1 and MAP3K7-binding protein 1 (TAB1) from Homo sapiens (Human).